The primary structure comprises 307 residues: MFSFNMFDHPIPRVFQNRFSTQYRCFSVSMLAGPNDRSDVEKGGKIIMPPSALDQLSRLNITYPMLFKLTNKNSDRMTHCGVLEFVADEGICYLPHWMMQNLLLEEGGLVQVESVNLQVATYSKFQPQSPDFLDITNPKAVLENALRNFACLTTGDVIAINYNEKIYELRVMETKPDKAVSIIECDMNVDFDAPLGYKEPERPVQHEESIEGEADHSGYAGEVGFRAFSGSGNRLDGKKKGVEPSPSPIKPGDIKRGIPNYEFKLGKITFIRNSRPLVKKVEEDEAGGRFIAFSGEGQSLRKKGRKP.

The residue at position 1 (methionine 1) is an N-acetylmethionine. A phosphoserine mark is found at serine 129, serine 231, serine 245, serine 247, and serine 299. 2 disordered regions span residues 230–255 (GSGN…GDIK) and 288–307 (GRFI…GRKP).

The protein belongs to the UFD1 family. As to quaternary structure, heterodimer with NPLOC4, this heterodimer binds VCP and inhibits Golgi membrane fusion. Interacts with USP13. Interacts with ZFAND2B; probably through VCP.

It is found in the nucleus. It localises to the cytoplasm. Its subcellular location is the cytosol. It functions in the pathway protein degradation; proteasomal ubiquitin-dependent pathway. In terms of biological role, essential component of the ubiquitin-dependent proteolytic pathway which degrades ubiquitin fusion proteins. The ternary complex containing UFD1, VCP and NPLOC4 binds ubiquitinated proteins and is necessary for the export of misfolded proteins from the ER to the cytoplasm, where they are degraded by the proteasome. The NPLOC4-UFD1-VCP complex regulates spindle disassembly at the end of mitosis and is necessary for the formation of a closed nuclear envelope. It may be involved in the development of some ectoderm-derived structures. Acts as a negative regulator of type I interferon production via the complex formed with VCP and NPLOC4, which binds to RIGI and recruits RNF125 to promote ubiquitination and degradation of RIGI. The protein is Ubiquitin recognition factor in ER-associated degradation protein 1 of Mus musculus (Mouse).